Here is a 103-residue protein sequence, read N- to C-terminus: Putative membrane protein insertion efficiency factor (103 aa).

It belongs to the UPF0161 family.

It localises to the cell membrane. Could be involved in insertion of integral membrane proteins into the membrane. This is Putative membrane protein insertion efficiency factor from Clavibacter sepedonicus (Clavibacter michiganensis subsp. sepedonicus).